Reading from the N-terminus, the 1193-residue chain is Protein diaphanous homolog 3 (1193 aa).

Residues 1-10 (MERHQPRLHH) show a composition bias toward basic residues. Positions 1-57 (MERHQPRLHHPAQGSAAGTPYPSSASLRGCRESKMPRRKGPQHPPPPSGPEEPGEKR) are disordered. At Ser26 the chain carries Phosphoserine. Residues 36-60 (PRRKGPQHPPPPSGPEEPGEKRPKF) carry the Nuclear localization signal motif. Thr68 is modified (phosphothreonine). A phosphoserine mark is found at Ser77 and Ser175. The GBD/FH3 domain occupies 114–476 (PKPLSENELL…QIVLHRDGMD (363 aa)). Residues 497 to 554 (IDQAKLEEFEEKASELYKKFEKEFTDHQETQAELQKKEAKINELQAELQAFKSQFGAL) are a coiled coil. Residues 558-622 (CNIPLPPSKE…PPPLGFLGGQ (65 aa)) form a disordered region. Residues 561–631 (PLPPSKEGGT…QNSPPLPILP (71 aa)) enclose the FH1 domain. A compositionally biased stretch (pro residues) spans 575 to 600 (LPPPPPLPSGGGVPPPPPPPPPPPLP). Residue Ser624 is modified to Phosphoserine. Positions 636-1034 (PKKEFKPEIS…EKRVRIAKEL (399 aa)) constitute an FH2 domain. Positions 1013 to 1056 (KENIKKREAEEKEKRVRIAKELAERERLERQQKKKRLLEMKTEG) form a coiled coil. A DAD domain is found at 1057-1087 (DETGVMDNLLEALQSGAAFRDRRKRTPMPKD). 2 positions are modified to phosphoserine: Ser1093 and Ser1179. Residues 1184 to 1193 (EALLARLRAL) carry the Nuclear export signal motif.

The protein belongs to the formin homology family. Diaphanous subfamily. Ubiquitinated.

It is found in the cytoplasm. It localises to the nucleus. Actin nucleation and elongation factor required for the assembly of F-actin structures, such as actin cables and stress fibers. Required for cytokinesis, stress fiber formation and transcriptional activation of the serum response factor. Binds to GTP-bound form of Rho and to profilin: acts in a Rho-dependent manner to recruit profilin to the membrane, where it promotes actin polymerization. DFR proteins couple Rho and Src tyrosine kinase during signaling and the regulation of actin dynamics. Also acts as an actin nucleation and elongation factor in the nucleus by promoting nuclear actin polymerization inside the nucleus to drive serum-dependent SRF-MRTFA activity. The polypeptide is Protein diaphanous homolog 3 (DIAPH3) (Homo sapiens (Human)).